Reading from the N-terminus, the 296-residue chain is 4-hydroxy-tetrahydrodipicolinate synthase (296 aa).

T49 is a pyruvate binding site. The active-site Proton donor/acceptor is Y137. K166 serves as the catalytic Schiff-base intermediate with substrate. Residue I208 participates in pyruvate binding.

Belongs to the DapA family. Homotetramer; dimer of dimers.

Its subcellular location is the cytoplasm. It carries out the reaction L-aspartate 4-semialdehyde + pyruvate = (2S,4S)-4-hydroxy-2,3,4,5-tetrahydrodipicolinate + H2O + H(+). It participates in amino-acid biosynthesis; L-lysine biosynthesis via DAP pathway; (S)-tetrahydrodipicolinate from L-aspartate: step 3/4. In terms of biological role, catalyzes the condensation of (S)-aspartate-beta-semialdehyde [(S)-ASA] and pyruvate to 4-hydroxy-tetrahydrodipicolinate (HTPA). This is 4-hydroxy-tetrahydrodipicolinate synthase from Azobacteroides pseudotrichonymphae genomovar. CFP2.